The sequence spans 137 residues: Putative pre-16S rRNA nuclease (137 aa).

The protein belongs to the YqgF nuclease family.

It is found in the cytoplasm. In terms of biological role, could be a nuclease involved in processing of the 5'-end of pre-16S rRNA. The sequence is that of Putative pre-16S rRNA nuclease from Bacillus cytotoxicus (strain DSM 22905 / CIP 110041 / 391-98 / NVH 391-98).